The sequence spans 221 residues: Probable septum site-determining protein MinC (221 aa).

This sequence belongs to the MinC family. Interacts with MinD and FtsZ.

Functionally, cell division inhibitor that blocks the formation of polar Z ring septums. Rapidly oscillates between the poles of the cell to destabilize FtsZ filaments that have formed before they mature into polar Z rings. Prevents FtsZ polymerization. In Shewanella halifaxensis (strain HAW-EB4), this protein is Probable septum site-determining protein MinC.